Reading from the N-terminus, the 435-residue chain is Ribulose bisphosphate carboxylase/oxygenase activase 2, chloroplastic (435 aa).

The N-terminal 56 residues, 1–56 (MAAAYSTVGAVNRAPLSLNGSGARASLVPSTAFFGSSLKKSAAKFPKASSGNFKIV), are a transit peptide targeting the chloroplast. 165–172 (GGKGQGKS) is an ATP binding site.

Belongs to the RuBisCO activase family.

It localises to the plastid. It is found in the chloroplast stroma. Functionally, activation of RuBisCO (ribulose-1,5-bisphosphate carboxylase/oxygenase; EC 4.1.1.39) involves the ATP-dependent carboxylation of the epsilon-amino group of lysine leading to a carbamate structure. This Larrea tridentata (Creosote bush) protein is Ribulose bisphosphate carboxylase/oxygenase activase 2, chloroplastic (RCA2).